We begin with the raw amino-acid sequence, 48 residues long: Large ribosomal subunit protein bL34c (48 aa).

The disordered stretch occupies residues 18–48 (SGFRSRMATPQGRKTIRNRRKKGRKNLTLRR). Residues 31–48 (KTIRNRRKKGRKNLTLRR) are compositionally biased toward basic residues.

Belongs to the bacterial ribosomal protein bL34 family.

It is found in the plastid. The protein resides in the chloroplast. This Phaeodactylum tricornutum (strain CCAP 1055/1) protein is Large ribosomal subunit protein bL34c.